A 388-amino-acid polypeptide reads, in one-letter code: LL-diaminopimelate aminotransferase (388 aa).

Residues Tyr13, Gly38, Lys102, Tyr126, and Asn176 each contribute to the substrate site. Pyridoxal 5'-phosphate is bound by residues 101–102 (SK), Tyr126, Asn176, Tyr207, and 235–237 (SLS). Position 238 is an N6-(pyridoxal phosphate)lysine (Lys238). Position 246 (Arg246) interacts with pyridoxal 5'-phosphate. A substrate-binding site is contributed by Arg364.

The protein belongs to the class-I pyridoxal-phosphate-dependent aminotransferase family. LL-diaminopimelate aminotransferase subfamily. In terms of assembly, homodimer. Pyridoxal 5'-phosphate is required as a cofactor.

It carries out the reaction (2S,6S)-2,6-diaminopimelate + 2-oxoglutarate = (S)-2,3,4,5-tetrahydrodipicolinate + L-glutamate + H2O + H(+). The protein operates within amino-acid biosynthesis; L-lysine biosynthesis via DAP pathway; LL-2,6-diaminopimelate from (S)-tetrahydrodipicolinate (aminotransferase route): step 1/1. Functionally, involved in the synthesis of meso-diaminopimelate (m-DAP or DL-DAP), required for both lysine and peptidoglycan biosynthesis. Catalyzes the direct conversion of tetrahydrodipicolinate to LL-diaminopimelate. The chain is LL-diaminopimelate aminotransferase from Dehalococcoides mccartyi (strain CBDB1).